Here is an 82-residue protein sequence, read N- to C-terminus: Chaplin-E (82 aa).

The first 27 residues, 1 to 27, serve as a signal peptide directing secretion; sequence MKNLKKAAAVTMVAGGLIAAGAGMASA. Residues 41–81 form the Chaplin domain; that stretch reads SPGVASGNLVQAPIHIPVNAVGNSVNVIGVLNPAFGNLGVN.

The protein belongs to the chaplin family. Short chaplin subfamily.

The protein resides in the cell surface. It localises to the secreted. Its subcellular location is the cell wall. The protein localises to the fimbrium. One of 8 partially redundant surface-active proteins required for efficient formation of aerial mycelium; the short chaplins assemble into a hydrophobic, amyloidal fibrillar surface layer that envelopes and protects aerial hyphae and spores, presumably anchored to the long chaplins. Chaplins have an overlapping function with the surface-active SapB peptide; chaplins are essential on minimal medium while on rich medium both chaplins and SapB are required for efficient aerial hyphae formation. Chaplins are also involved in cell attachment to a hydrophobic surface. Forms amyloid fibrils in vitro probably composed of stacked beta-sheets, at low extracellular concentrations individually restores the ability to form aerial hyphae to a chaplin-deficient strain, but does so less well than other short chaplins. A small chaplin extract (ChpD, ChpE, ChpF, ChpG and ChpH) self-assembles into 2 different amyloids; small fibrils at the air-water interface form an amphipathic membrane that resembles spore-surface structures involved in aerial hyphae formation, and hydrophilic fibrils in solution that resemble the fibers that attach cells to a hydrophobic surface. At the air-water interface the hydrophilic surface is in contact with water (probably equivalent to the peptidoglycan layer), while the hydrophobic face is exposed to the air, making the surface of the aerial hyphae hydrophobic. A minimal chaplin strain capable of forming aerial mycelium/hyphae on minimal medium contains ChpC, ChpE and ChpH. The strain also has restored rodlet formation on the hyphae surface. A second strain with ChpA, ChpD and ChpE makes slightly less robust hyphae. This essential chaplin may coordinate the assembly and/or polymerization of the other chaplins. A small chaplin extract applied to a chaplin-deficient strain restores aerial hyphae formation. The small chaplin extract forms an amyloid-like structure similar to that seen on the surface of cells without rodlets (rdlA-rdlB deletions), and is highly surface active, reducing surface tension from 72 to 26 mJ/m(2), which probably allows escape of hyphae from an aqueous environment into air. The polypeptide is Chaplin-E (Streptomyces coelicolor (strain ATCC BAA-471 / A3(2) / M145)).